A 611-amino-acid chain; its full sequence is Protein Pixie (611 aa).

4Fe-4S ferredoxin-type domains follow at residues 15–45 (RIAI…MGKL) and 54–83 (KIAS…IINL). 2 consecutive ABC transporter domains span residues 78–323 (ITII…FLDG) and 350–570 (IKRM…LELL). ATP is bound by residues 118–125 (GQNGIGKS) and 387–394 (GENGTGKT).

It belongs to the ABC transporter superfamily. ABCE family. Interacts with components of eIF3 complex, namely eIF3a, eIF3j, eIF3b, eIF3c and eIF3i. Associates with the 40S ribosome subunit in an ATP-dependent manner and independently from the presence of the eIF3 complex. Forms a complex with Git and Pak; the interaction with Pak may be mediated by pix/dPIX. Post-translationally, ubiquitinated by Cnot4. Ubiquitination mediates the recruitment of autophagy receptors to the mitochondrial outer membrane and initiates mitophagy. In terms of tissue distribution, expressed in early and late larval imaginal disks (at protein level).

Its subcellular location is the cytoplasm. Plays a role in translation initiation and quality control of translation. Together with pelo and HBS1, is required for 48S complex formation from 80S ribosomes and dissociation of vacant 80S ribosomes. Stabilizes core components of eIF3 complex promoting their assembly into translation initiation-competent complexes. Together with pelo and HBS1, recognizes stalled ribosomes and promotes dissociation of elongation complexes assembled on non-stop mRNAs; this triggers endonucleolytic cleavage of the mRNA, a mechanism to release non-functional ribosomes and to degrade damaged mRNAs as part of the No-Go Decay (NGD) pathway. Plays a role in the regulation of mRNA turnover. Plays a role in quality control of translation of mitochondrial outer membrane-localized mRNA. As part of the Pink1-regulated signaling, ubiquitinated by Cnot4 upon mitochondria damage; this modification generates polyubiquitin signals that recruits autophagy receptors to the mitochondrial outer membrane to initiate mitophagy. Required in the wing disk for cell division and growth as well as cell survival. During muscle embryogenesis, required for the recruitment of Pak to muscle attachments in the embryo, hence may play a role in proper muscle morphogenesis and proper guidance and targeting of subsets of myotubes. This Drosophila melanogaster (Fruit fly) protein is Protein Pixie.